A 393-amino-acid chain; its full sequence is Large ribosomal subunit protein uL2m (393 aa).

Residues 1-43 (MLVLGSLRSALSCSSTASLISKRNPCYPYGILCRTLSQSVKLW) constitute a mitochondrion transit peptide. A disordered region spans residues 337–393 (AMNKCDHPHGGGRGKSKSNKLSMSPWGQLAKGYKTRRGKNQNRMKVKDRPRGKDARL). Positions 369-380 (YKTRRGKNQNRM) are enriched in basic residues. A compositionally biased stretch (basic and acidic residues) spans 381 to 393 (KVKDRPRGKDARL).

The protein belongs to the universal ribosomal protein uL2 family. Component of the mitochondrial large ribosomal subunit (mt-LSU). Mature yeast 74S mitochondrial ribosomes consist of a small (37S) and a large (54S) subunit. The 37S small subunit contains a 15S ribosomal RNA (15S mt-rRNA) and 34 different proteins. The 54S large subunit contains a 21S rRNA (21S mt-rRNA) and 46 different proteins. uL2m has a Na/K ligand binding site.

The protein localises to the mitochondrion. Functionally, component of the mitochondrial ribosome (mitoribosome), a dedicated translation machinery responsible for the synthesis of mitochondrial genome-encoded proteins, including at least some of the essential transmembrane subunits of the mitochondrial respiratory chain. The mitoribosomes are attached to the mitochondrial inner membrane and translation products are cotranslationally integrated into the membrane. The chain is Large ribosomal subunit protein uL2m (RML2) from Saccharomyces cerevisiae (strain ATCC 204508 / S288c) (Baker's yeast).